We begin with the raw amino-acid sequence, 852 residues long: Beta-galactosidase 8 (852 aa).

A signal peptide spans 1–29 (MEIAAKMVKVRKMEMILLLILVIVVAATA). N-linked (GlcNAc...) asparagine glycosylation occurs at Asn-31. The active-site Proton donor is the Glu-188. Catalysis depends on Glu-257, which acts as the Nucleophile. Asn-258, Asn-475, Asn-766, and Asn-807 each carry an N-linked (GlcNAc...) asparagine glycan. An SUEL-type lectin domain is found at 766 to 852 (NRTRPVLSLK…KSLAVEASCS (87 aa)).

Belongs to the glycosyl hydrolase 35 family. As to expression, expressed in roots, flowers and siliques.

The protein localises to the secreted. The protein resides in the extracellular space. Its subcellular location is the apoplast. The enzyme catalyses Hydrolysis of terminal non-reducing beta-D-galactose residues in beta-D-galactosides.. In Arabidopsis thaliana (Mouse-ear cress), this protein is Beta-galactosidase 8 (BGAL8).